The sequence spans 755 residues: Xaa-Pro dipeptidyl-peptidase (755 aa).

Catalysis depends on charge relay system residues Ser348, Asp468, and His498.

The protein belongs to the peptidase S15 family. In terms of assembly, homodimer.

Its subcellular location is the cytoplasm. The enzyme catalyses Hydrolyzes Xaa-Pro-|- bonds to release unblocked, N-terminal dipeptides from substrates including Ala-Pro-|-p-nitroanilide and (sequentially) Tyr-Pro-|-Phe-Pro-|-Gly-Pro-|-Ile.. Its function is as follows. Removes N-terminal dipeptides sequentially from polypeptides having unsubstituted N-termini provided that the penultimate residue is proline. The polypeptide is Xaa-Pro dipeptidyl-peptidase (Streptococcus thermophilus (strain ATCC BAA-491 / LMD-9)).